The sequence spans 492 residues: MKAFHLLLFHGSFIFPECILIFGLILLLMIDSTSDQKDTPWLYFISSTSLVMSITALLFRWREEPMISFSGNFQTNNFNEVFQFLILLCSTLCIPLSVEYIECTEMAITEFLLFVLTATLGGMFLCGANDLITIFVAPECFSLCSYLLSGYTKRDVRSNEATTKYLLMGGASSSILVHGFSWLYGSSGGEIELQEILNGLINTQMYNSPGISIALISITVGIGFKLSPAPSHQWTPDVYEGSPTPVVAFLSVTSKVAASASATRIFDIPFYFSSNEWHLLLEILAILSMILGNLIAITQTSMKRMLAYSSIGQIGYVIIGIIVGDSNDGYASMITYMLFYISMNLGTFARIVSFGPRTGTDNIRDYAGLYTKDPFLALSSALCLLSLGGIPPLAGFFGKLHLFWCGWQAGLYFLVSIGLLTSVVSIYYYLKIIKLLMTGRNKEITPHVRNYRRSPLRSNNSIELSMIVCVIASTIPGISMNPIIAIAQDTLF.

A run of 13 helical transmembrane segments spans residues 6-26, 39-59, 81-101, 106-126, 131-151, 165-185, 209-229, 277-297, 305-325, 329-349, 377-397, 400-420, and 466-486; these read LLLFHGSFIFPECILIFGLIL, TPWLYFISSTSLVMSITALLF, VFQFLILLCSTLCIPLSVEYI, MAITEFLLFVLTATLGGMFLC, LITIFVAPECFSLCSYLLSGY, YLLMGGASSSILVHGFSWLYG, PGISIALISITVGIGFKLSPA, WHLLLEILAILSMILGNLIAI, MLAYSSIGQIGYVIIGIIVGD, GYASMITYMLFYISMNLGTFA, ALSSALCLLSLGGIPPLAGFF, LHLFWCGWQAGLYFLVSIGLL, and MIVCVIASTIPGISMNPIIAI.

It belongs to the complex I subunit 2 family. As to quaternary structure, NDH is composed of at least 16 different subunits, 5 of which are encoded in the nucleus.

It is found in the plastid. The protein resides in the chloroplast thylakoid membrane. The enzyme catalyses a plastoquinone + NADH + (n+1) H(+)(in) = a plastoquinol + NAD(+) + n H(+)(out). It catalyses the reaction a plastoquinone + NADPH + (n+1) H(+)(in) = a plastoquinol + NADP(+) + n H(+)(out). In terms of biological role, NDH shuttles electrons from NAD(P)H:plastoquinone, via FMN and iron-sulfur (Fe-S) centers, to quinones in the photosynthetic chain and possibly in a chloroplast respiratory chain. The immediate electron acceptor for the enzyme in this species is believed to be plastoquinone. Couples the redox reaction to proton translocation, and thus conserves the redox energy in a proton gradient. The polypeptide is NAD(P)H-quinone oxidoreductase subunit 2 A, chloroplastic (Illicium oligandrum (Star anise)).